The primary structure comprises 261 residues: Ribosome-inactivating protein PD-L1/PD-L2 (261 aa).

N-linked (GlcNAc...) asparagine; in PD-L1 and PD-L2 glycans are attached at residues Asn10 and Asn43. 2 disulfides stabilise this stretch: Cys34–Cys258 and Cys84–Cys105. Residue Tyr72 is part of the active site. Val73 lines the substrate pocket. Substrate is bound at residue Ser120. Active-site residues include Tyr122, Glu175, and Arg178. Arg178 provides a ligand contact to substrate. Asn255 is a glycosylation site (N-linked (GlcNAc...) asparagine; in PD-L1).

It belongs to the ribosome-inactivating protein family. Type 1 RIP subfamily. Post-translationally, N-glycosylated. Loss of glycosylation does not affect DNA-cleaving ability. Loss of glycosylation does not affect protein synthesis inhibition, but increases adenine polynucleotide glycosidase activity likely as a consequence of the increased accessibility of substrates to the active site pocket in the absence of glycosylation. As to expression, expressed in leaves (at protein level).

It carries out the reaction Endohydrolysis of the N-glycosidic bond at one specific adenosine on the 28S rRNA.. Functionally, inhibits protein synthesis. Has adenine polynucleotide glycosidase activity on herring sperm (hs)DNA and poly(A) substrates. Cleaves supercoiled pBR322 dsDNA. In Phytolacca dioica (Bella sombra tree), this protein is Ribosome-inactivating protein PD-L1/PD-L2.